A 230-amino-acid polypeptide reads, in one-letter code: Extracellular ribonuclease LE (230 aa).

The N-terminal stretch at 1–25 is a signal peptide; sequence MASNSAFSLFLILLIITQCLSVLNA. Residue Q37 participates in RNA binding. 5 disulfides stabilise this stretch: C43/C49, C50/C106, C79/C125, C186/C221, and C202/C213. RNA-binding positions include H64, F114, 117–118, and 121–122; these read HE and KH. The Proton donor role is filled by H64. Residue E118 is part of the active site. H122 (proton acceptor) is an active-site residue.

The protein belongs to the RNase T2 family.

It is found in the secreted. It localises to the extracellular space. The protein resides in the cell wall. The catalysed reaction is a ribonucleotidyl-ribonucleotide-RNA + H2O = a 3'-end 3'-phospho-ribonucleotide-RNA + a 5'-end dephospho-ribonucleoside-RNA + H(+). Probably involved in plant phosphate-starvation rescue system. The sequence is that of Extracellular ribonuclease LE from Solanum lycopersicum (Tomato).